A 459-amino-acid chain; its full sequence is Ribulose bisphosphate carboxylase (459 aa).

Position 111 (Asn-111) interacts with substrate. The active-site Proton acceptor is Lys-166. Lys-168 is a substrate binding site. Positions 191, 193, and 194 each coordinate Mg(2+). Lys-191 carries the post-translational modification N6-carboxylysine. His-287 acts as the Proton acceptor in catalysis. Substrate contacts are provided by Arg-288, His-321, and Ser-368.

This sequence belongs to the RuBisCO large chain family. Type II subfamily. As to quaternary structure, homodimer. Mg(2+) is required as a cofactor.

The catalysed reaction is 2 (2R)-3-phosphoglycerate + 2 H(+) = D-ribulose 1,5-bisphosphate + CO2 + H2O. It catalyses the reaction D-ribulose 1,5-bisphosphate + O2 = 2-phosphoglycolate + (2R)-3-phosphoglycerate + 2 H(+). Functionally, ruBisCO catalyzes two reactions: the carboxylation of D-ribulose 1,5-bisphosphate, the primary event in carbon dioxide fixation, as well as the oxidative fragmentation of the pentose substrate. Both reactions occur simultaneously and in competition at the same active site. In Albidiferax ferrireducens (strain ATCC BAA-621 / DSM 15236 / T118) (Rhodoferax ferrireducens), this protein is Ribulose bisphosphate carboxylase.